The following is a 385-amino-acid chain: Cytochrome b (385 aa).

4 helical membrane-spanning segments follow: residues 32-52 (LGSL…FMAM), 76-98 (WLLR…MHIA), 113-133 (VWIV…LGYC), and 179-199 (FFAL…MHFM). His82 and His96 together coordinate heme b. The heme b site is built by His183 and His197. Residue His202 participates in a ubiquinone binding. 4 helical membrane-spanning segments follow: residues 225–245 (FIFK…LFVF), 289–309 (LLGV…PITD), 321–341 (LSKF…QIGQ), and 348–368 (FVLM…IIVP).

It belongs to the cytochrome b family. In terms of assembly, fungal cytochrome b-c1 complex contains 10 subunits; 3 respiratory subunits, 2 core proteins and 5 low-molecular weight proteins. Cytochrome b-c1 complex is a homodimer. The cofactor is heme b.

The protein localises to the mitochondrion inner membrane. In terms of biological role, component of the ubiquinol-cytochrome c reductase complex (complex III or cytochrome b-c1 complex) that is part of the mitochondrial respiratory chain. The b-c1 complex mediates electron transfer from ubiquinol to cytochrome c. Contributes to the generation of a proton gradient across the mitochondrial membrane that is then used for ATP synthesis. The chain is Cytochrome b (COB) from Candida glabrata (strain ATCC 2001 / BCRC 20586 / JCM 3761 / NBRC 0622 / NRRL Y-65 / CBS 138) (Yeast).